Reading from the N-terminus, the 371-residue chain is DNA replication and repair protein RecF (371 aa).

30-37 (GENAQGKT) lines the ATP pocket.

Belongs to the RecF family.

Its subcellular location is the cytoplasm. Its function is as follows. The RecF protein is involved in DNA metabolism; it is required for DNA replication and normal SOS inducibility. RecF binds preferentially to single-stranded, linear DNA. It also seems to bind ATP. The sequence is that of DNA replication and repair protein RecF from Staphylococcus epidermidis (strain ATCC 12228 / FDA PCI 1200).